Consider the following 131-residue polypeptide: D-ribose pyranase (131 aa).

His20 (proton donor) is an active-site residue. Substrate contacts are provided by residues Asp28, His98, and 120–122; that span reads FSN.

The protein belongs to the RbsD / FucU family. RbsD subfamily. In terms of assembly, homodecamer.

It is found in the cytoplasm. The catalysed reaction is beta-D-ribopyranose = beta-D-ribofuranose. It participates in carbohydrate metabolism; D-ribose degradation; D-ribose 5-phosphate from beta-D-ribopyranose: step 1/2. Functionally, catalyzes the interconversion of beta-pyran and beta-furan forms of D-ribose. This chain is D-ribose pyranase, found in Lactobacillus acidophilus (strain ATCC 700396 / NCK56 / N2 / NCFM).